The following is a 1102-amino-acid chain: MPKRTDLKSVLVIGSGPIVIGQAAEFDYSGTQALRVLKEEGLRVILVNSNPATIMTDPEFADATYVEPITPEVVEKIIAKERPDAILPTLGGQTALNTAIALDKNGVLEKYNVELIGANIAAIELGEDREKFKGVVERCGAESARSHIIHTMEEAFAAAEDLGYPMVVRPSFTMGGLGSGLAYNEDDLRRIVGQGLQYSPTTEVLLEESILGWKEYELEMMRDKNDNVVVVCSIENFDPVGVHTGDSITVAPALTLTDREYQKLRDVSIAVIREVGVDTGGCNIQFAIDPATGRVVVIEMNPRVSRSSALASKATGFAIAKIATKLSLGYTLDEIPNDITQKTPASFEPTLDYVVVKVPRFAFEKFPAADNTLTTTMKSVGEAMAMGRNFTEALQKALRSLEQKGSQLDFSSVPEYEVAELIEKAKRPTTDRLHQVQRALLGGATVEDLFEATKIDPWFLDQLQLLNETAQEIRKAGVLTEEMLRNAKRHGFSDEQIGALTHNNEAVVRGVRQALGIRPVYKTVDTCAAEFAAYTPYHYSSYDEEDEVGLHAKPSVIILGSGPNRIGQGIEFDYSCVHASMALRKAGYETVMVNCNPETVSTDYDVSTRLYFEPLTLEDVLEVIAAEERTGGVMGVFVQLGGQTPLKLAQQLADAGVPILGTSPEAIDLAEHRGAFARVLDEAGLTSPKNGTAVSFEDAKKIADEIGYPVLVRPSYVLGGRGMEIVYDEANLSRYIANATEITPDHPVLIDRFLEDAVEIDVDALFDGTDMYLGGIMEHIEEAGIHSGDSACVLPPITLGNNVIERVRTATRAIAEGVGVRGLINIQFALASDVLYVLEANPRASRTVPFVSKATGVQMAKAAALIGTGVTINQLRGAYKMLPETGDGSTLPLDAPVAVKEAVLPFSRFRTPEGKVVDSLLGPEMRSTGEVMGIDKHFDTAFAKSQAAANNALPTEGKIFVSVANRDKRSVIMGVKRLSDLGFEIVSTGGTADVLRRNGIQATPVRKVAEGSSAEGEGTIADLVIAGEIDMVFNTPSGGEARSDGYELRAAATSIGIPCITTVAEFNAAVQAIEALRTYEWSVTSLQEHAANLSAAMEAANA.

Residues 1 to 402 are carboxyphosphate synthetic domain; the sequence is MPKRTDLKSV…ALQKALRSLE (402 aa). Residues Arg129, Arg169, Gly175, Gly176, Glu208, Ile210, Glu215, Gly241, Val242, His243, Gln285, and Glu299 each coordinate ATP. The ATP-grasp 1 domain occupies 133 to 328; the sequence is KGVVERCGAE…IAKIATKLSL (196 aa). 3 residues coordinate Mg(2+): Gln285, Glu299, and Asn301. Mn(2+) is bound by residues Gln285, Glu299, and Asn301. Residues 403–546 form an oligomerization domain region; that stretch reads QKGSQLDFSS…YHYSSYDEED (144 aa). The carbamoyl phosphate synthetic domain stretch occupies residues 547-950; sequence EVGLHAKPSV…AFAKSQAAAN (404 aa). Positions 677-868 constitute an ATP-grasp 2 domain; sequence ARVLDEAGLT…MAKAAALIGT (192 aa). ATP contacts are provided by Arg713, Arg752, Leu754, Glu759, Gly784, Ile785, His786, Ser787, Gln827, and Glu839. Residues Gln827, Glu839, and Asn841 each coordinate Mg(2+). Positions 827, 839, and 841 each coordinate Mn(2+). The MGS-like domain occupies 951-1096; it reads NALPTEGKIF…QEHAANLSAA (146 aa). Residues 951-1102 are allosteric domain; it reads NALPTEGKIF…LSAAMEAANA (152 aa).

This sequence belongs to the CarB family. Composed of two chains; the small (or glutamine) chain promotes the hydrolysis of glutamine to ammonia, which is used by the large (or ammonia) chain to synthesize carbamoyl phosphate. Tetramer of heterodimers (alpha,beta)4. It depends on Mg(2+) as a cofactor. Requires Mn(2+) as cofactor.

The catalysed reaction is hydrogencarbonate + L-glutamine + 2 ATP + H2O = carbamoyl phosphate + L-glutamate + 2 ADP + phosphate + 2 H(+). The enzyme catalyses hydrogencarbonate + NH4(+) + 2 ATP = carbamoyl phosphate + 2 ADP + phosphate + 2 H(+). It participates in amino-acid biosynthesis; L-arginine biosynthesis; carbamoyl phosphate from bicarbonate: step 1/1. The protein operates within pyrimidine metabolism; UMP biosynthesis via de novo pathway; (S)-dihydroorotate from bicarbonate: step 1/3. Its function is as follows. Large subunit of the glutamine-dependent carbamoyl phosphate synthetase (CPSase). CPSase catalyzes the formation of carbamoyl phosphate from the ammonia moiety of glutamine, carbonate, and phosphate donated by ATP, constituting the first step of 2 biosynthetic pathways, one leading to arginine and/or urea and the other to pyrimidine nucleotides. The large subunit (synthetase) binds the substrates ammonia (free or transferred from glutamine from the small subunit), hydrogencarbonate and ATP and carries out an ATP-coupled ligase reaction, activating hydrogencarbonate by forming carboxy phosphate which reacts with ammonia to form carbamoyl phosphate. This Paenarthrobacter aurescens (strain TC1) protein is Carbamoyl phosphate synthase large chain.